Here is a 550-residue protein sequence, read N- to C-terminus: Methionine--tRNA ligase (550 aa).

A 'HIGH' region motif is present at residues 13-23 (PYANGEIHLGH). Residues C144, C147, C157, and C160 each contribute to the Zn(2+) site. The 'KMSKS' region motif lies at 329-333 (KMSKS). K332 is an ATP binding site.

The protein belongs to the class-I aminoacyl-tRNA synthetase family. MetG type 1 subfamily. As to quaternary structure, monomer. Zn(2+) is required as a cofactor.

It is found in the cytoplasm. It catalyses the reaction tRNA(Met) + L-methionine + ATP = L-methionyl-tRNA(Met) + AMP + diphosphate. Its function is as follows. Is required not only for elongation of protein synthesis but also for the initiation of all mRNA translation through initiator tRNA(fMet) aminoacylation. This chain is Methionine--tRNA ligase, found in Ruthia magnifica subsp. Calyptogena magnifica.